A 308-amino-acid chain; its full sequence is Aspartate carbamoyltransferase catalytic subunit (308 aa).

Carbamoyl phosphate is bound by residues Arg-49 and Thr-50. Lys-77 lines the L-aspartate pocket. Residues Arg-99, His-127, and Gln-130 each coordinate carbamoyl phosphate. L-aspartate contacts are provided by Arg-160 and Arg-211. Ala-252 and Pro-253 together coordinate carbamoyl phosphate.

The protein belongs to the aspartate/ornithine carbamoyltransferase superfamily. ATCase family. Heterododecamer (2C3:3R2) of six catalytic PyrB chains organized as two trimers (C3), and six regulatory PyrI chains organized as three dimers (R2).

It catalyses the reaction carbamoyl phosphate + L-aspartate = N-carbamoyl-L-aspartate + phosphate + H(+). It participates in pyrimidine metabolism; UMP biosynthesis via de novo pathway; (S)-dihydroorotate from bicarbonate: step 2/3. In terms of biological role, catalyzes the condensation of carbamoyl phosphate and aspartate to form carbamoyl aspartate and inorganic phosphate, the committed step in the de novo pyrimidine nucleotide biosynthesis pathway. The polypeptide is Aspartate carbamoyltransferase catalytic subunit (Geobacillus thermodenitrificans (strain NG80-2)).